The chain runs to 358 residues: Methylthioribose-1-phosphate isomerase (358 aa).

Substrate contacts are provided by residues 54–56 (RGA), R96, and Q205. D246 serves as the catalytic Proton donor. 256-257 (NK) is a binding site for substrate.

The protein belongs to the eIF-2B alpha/beta/delta subunits family. MtnA subfamily.

It catalyses the reaction 5-(methylsulfanyl)-alpha-D-ribose 1-phosphate = 5-(methylsulfanyl)-D-ribulose 1-phosphate. Its pathway is amino-acid biosynthesis; L-methionine biosynthesis via salvage pathway; L-methionine from S-methyl-5-thio-alpha-D-ribose 1-phosphate: step 1/6. Catalyzes the interconversion of methylthioribose-1-phosphate (MTR-1-P) into methylthioribulose-1-phosphate (MTRu-1-P). The chain is Methylthioribose-1-phosphate isomerase from Stutzerimonas stutzeri (strain A1501) (Pseudomonas stutzeri).